An 803-amino-acid chain; its full sequence is Translation initiation factor IF-2 (803 aa).

The span at 65–75 shows a compositional bias: basic and acidic residues; it reads PDKVEEKKEHT. Residues 65-186 form a disordered region; sequence PDKVEEKKEH…PKSRKSKTLK (122 aa). Residues 175 to 185 are compositionally biased toward basic residues; sequence NKPKSRKSKTL. The tr-type G domain maps to 300 to 468; it reads IRPPVVTIMG…ILLTADAALE (169 aa). Residues 309–316 form a G1 region; sequence GHVDHGKT. 309-316 lines the GTP pocket; the sequence is GHVDHGKT. The tract at residues 334–338 is G2; it reads GITQH. Residues 355–358 are G3; it reads DTPG. GTP contacts are provided by residues 355 to 359 and 409 to 412; these read DTPGH and NKID. Residues 409-412 are G4; the sequence is NKID. The interval 445–447 is G5; that stretch reads SAK.

It belongs to the TRAFAC class translation factor GTPase superfamily. Classic translation factor GTPase family. IF-2 subfamily.

It localises to the cytoplasm. In terms of biological role, one of the essential components for the initiation of protein synthesis. Protects formylmethionyl-tRNA from spontaneous hydrolysis and promotes its binding to the 30S ribosomal subunits. Also involved in the hydrolysis of GTP during the formation of the 70S ribosomal complex. This chain is Translation initiation factor IF-2, found in Tropheryma whipplei (strain Twist) (Whipple's bacillus).